The chain runs to 224 residues: UPF0173 metal-dependent hydrolase EF_1371 (224 aa).

The protein belongs to the UPF0173 family.

This is UPF0173 metal-dependent hydrolase EF_1371 from Enterococcus faecalis (strain ATCC 700802 / V583).